We begin with the raw amino-acid sequence, 473 residues long: Aspartyl/glutamyl-tRNA(Asn/Gln) amidotransferase subunit B (473 aa).

It belongs to the GatB/GatE family. GatB subfamily. As to quaternary structure, heterotrimer of A, B and C subunits.

It carries out the reaction L-glutamyl-tRNA(Gln) + L-glutamine + ATP + H2O = L-glutaminyl-tRNA(Gln) + L-glutamate + ADP + phosphate + H(+). The catalysed reaction is L-aspartyl-tRNA(Asn) + L-glutamine + ATP + H2O = L-asparaginyl-tRNA(Asn) + L-glutamate + ADP + phosphate + 2 H(+). Its function is as follows. Allows the formation of correctly charged Asn-tRNA(Asn) or Gln-tRNA(Gln) through the transamidation of misacylated Asp-tRNA(Asn) or Glu-tRNA(Gln) in organisms which lack either or both of asparaginyl-tRNA or glutaminyl-tRNA synthetases. The reaction takes place in the presence of glutamine and ATP through an activated phospho-Asp-tRNA(Asn) or phospho-Glu-tRNA(Gln). In Mycoplasmopsis synoviae (strain 53) (Mycoplasma synoviae), this protein is Aspartyl/glutamyl-tRNA(Asn/Gln) amidotransferase subunit B.